The following is a 393-amino-acid chain: 1-deoxy-D-xylulose 5-phosphate reductoisomerase (393 aa).

NADPH is bound by residues T10, G11, S12, I13, R37, Q38, and N124. K125 lines the 1-deoxy-D-xylulose 5-phosphate pocket. E126 contacts NADPH. Mn(2+) is bound at residue D150. Positions 151, 152, 179, and 202 each coordinate 1-deoxy-D-xylulose 5-phosphate. E152 contributes to the Mn(2+) binding site. Residue G208 participates in NADPH binding. 1-deoxy-D-xylulose 5-phosphate contacts are provided by S215, N220, K221, and E224. Mn(2+) is bound at residue E224.

This sequence belongs to the DXR family. Mg(2+) is required as a cofactor. Requires Mn(2+) as cofactor.

It carries out the reaction 2-C-methyl-D-erythritol 4-phosphate + NADP(+) = 1-deoxy-D-xylulose 5-phosphate + NADPH + H(+). It functions in the pathway isoprenoid biosynthesis; isopentenyl diphosphate biosynthesis via DXP pathway; isopentenyl diphosphate from 1-deoxy-D-xylulose 5-phosphate: step 1/6. Functionally, catalyzes the NADPH-dependent rearrangement and reduction of 1-deoxy-D-xylulose-5-phosphate (DXP) to 2-C-methyl-D-erythritol 4-phosphate (MEP). The protein is 1-deoxy-D-xylulose 5-phosphate reductoisomerase of Cupriavidus necator (strain ATCC 17699 / DSM 428 / KCTC 22496 / NCIMB 10442 / H16 / Stanier 337) (Ralstonia eutropha).